The chain runs to 331 residues: Holliday junction branch migration complex subunit RuvB (331 aa).

Positions 1–182 (MSNDTLHKYE…FGIPLHLEFY (182 aa)) are large ATPase domain (RuvB-L). Residues leucine 21, arginine 22, glycine 63, lysine 66, threonine 67, threonine 68, 129-131 (EDY), arginine 172, tyrosine 182, and arginine 219 contribute to the ATP site. Residue threonine 67 coordinates Mg(2+). The interval 183–254 (SVDELVLVIK…FANSALFRLG (72 aa)) is small ATPAse domain (RuvB-S). The tract at residues 257–331 (GAGFDKMDLK…FEYLLSSKYI (75 aa)) is head domain (RuvB-H). DNA contacts are provided by arginine 310 and arginine 315.

This sequence belongs to the RuvB family. As to quaternary structure, homohexamer. Forms an RuvA(8)-RuvB(12)-Holliday junction (HJ) complex. HJ DNA is sandwiched between 2 RuvA tetramers; dsDNA enters through RuvA and exits via RuvB. An RuvB hexamer assembles on each DNA strand where it exits the tetramer. Each RuvB hexamer is contacted by two RuvA subunits (via domain III) on 2 adjacent RuvB subunits; this complex drives branch migration. In the full resolvosome a probable DNA-RuvA(4)-RuvB(12)-RuvC(2) complex forms which resolves the HJ.

It is found in the cytoplasm. The enzyme catalyses ATP + H2O = ADP + phosphate + H(+). Its function is as follows. The RuvA-RuvB-RuvC complex processes Holliday junction (HJ) DNA during genetic recombination and DNA repair, while the RuvA-RuvB complex plays an important role in the rescue of blocked DNA replication forks via replication fork reversal (RFR). RuvA specifically binds to HJ cruciform DNA, conferring on it an open structure. The RuvB hexamer acts as an ATP-dependent pump, pulling dsDNA into and through the RuvAB complex. RuvB forms 2 homohexamers on either side of HJ DNA bound by 1 or 2 RuvA tetramers; 4 subunits per hexamer contact DNA at a time. Coordinated motions by a converter formed by DNA-disengaged RuvB subunits stimulates ATP hydrolysis and nucleotide exchange. Immobilization of the converter enables RuvB to convert the ATP-contained energy into a lever motion, pulling 2 nucleotides of DNA out of the RuvA tetramer per ATP hydrolyzed, thus driving DNA branch migration. The RuvB motors rotate together with the DNA substrate, which together with the progressing nucleotide cycle form the mechanistic basis for DNA recombination by continuous HJ branch migration. Branch migration allows RuvC to scan DNA until it finds its consensus sequence, where it cleaves and resolves cruciform DNA. In Anaplasma marginale (strain Florida), this protein is Holliday junction branch migration complex subunit RuvB.